The chain runs to 297 residues: Superoxide dismutase 1 copper chaperone (297 aa).

Cysteine 11 lines the Cu cation pocket. A disordered region spans residues 222-263; sequence GSSCCSKKDSSPSEKPSCCSQEKKSCCSSKKPSCCSQEKKGC. Low complexity predominate over residues 234 to 257; it reads SEKPSCCSQEKKSCCSSKKPSCCS.

It belongs to the CCS1 family.

The protein localises to the cytoplasm. In terms of biological role, copper chaperone for superoxide dismutase 1 (sod1). Binds copper ions and delivers them specifically to sod1. Also has a role in cell protection against copper ion toxicity during conditions of copper excess. The C-terminal region is thought to act specifically in this sequestration role. The sequence is that of Superoxide dismutase 1 copper chaperone (ccs1) from Schizosaccharomyces pombe (strain 972 / ATCC 24843) (Fission yeast).